Consider the following 118-residue polypeptide: UPF0295 protein BCE33L0445 (118 aa).

A run of 2 helical transmembrane segments spans residues 12–32 (IRTFALSLVFIGLFIAYLGVF) and 43–63 (FMMVGFLAVIASTVVYFWIGM).

This sequence belongs to the UPF0295 family.

The protein resides in the cell membrane. This Bacillus cereus (strain ZK / E33L) protein is UPF0295 protein BCE33L0445.